The sequence spans 540 residues: Cytochrome P450 monooxygenase ptmG (540 aa).

An N-linked (GlcNAc...) asparagine glycan is attached at Asn17. The next 2 membrane-spanning stretches (helical) occupy residues 20-40 (VMTL…YICI) and 325-345 (AAFL…FLLL). Cys474 provides a ligand contact to heme.

This sequence belongs to the cytochrome P450 family. Heme serves as cofactor.

The protein resides in the membrane. Its pathway is secondary metabolite biosynthesis. Cytochrome P450 monooxygenase; part of the gene cluster that mediates the biosynthesis of the indole diterpenes penitrems. The geranylgeranyl diphosphate (GGPP) synthase ptmG catalyzes the first step in penitrem biosynthesis via conversion of farnesyl pyrophosphate and isopentyl pyrophosphate into geranylgeranyl pyrophosphate (GGPP). Condensation of indole-3-glycerol phosphate with GGPP by the prenyl transferase ptmC then forms 3-geranylgeranylindole (3-GGI). Epoxidation by the FAD-dependent monooxygenase ptmM leads to a epoxidized-GGI that is substrate of the terpene cyclase ptmB for cyclization to yield paspaline. Paspaline is subsequently converted to 13-desoxypaxilline by the cytochrome P450 monooxygenase ptmP, the latter being then converted to paxilline by the cytochrome P450 monooxygenase ptmQ. Paxilline is converted to beta-paxitriol via C-10 ketoreduction by the short-chain dehydrogenase ptmH which can be monoprenylated at the C-20 by the indole diterpene prenyltransferase ptmD. A two-step elimination (acetylation and elimination) process performed by the O-acetyltransferase ptmV and ptmI leads to the production of the prenylated form of penijanthine. The FAD-linked oxidoreductase ptmO then converts the prenylated form of penijanthine into PC-M5 which is in turn transformed into PC-M4 by the aromatic dimethylallyltransferase ptmE. Five sequential oxidative transformations performed by the cytochrome P450 monooxygenases ptmK, ptmU, ptmL, ptmN and ptmJ yield the various penitrem compounds. PtmK, ptmU and ptmM are involved in the formation of the key bicyclic ring of penitrem C via the formation of the intermediates secopenitrem D and penitrem D. PtmL catalyzes the epoxidation of penitrem D and C to yield penitrem B and F, respectively. PtmJ catalyzes the last benzylic hydroxylation to convert penitrem B to prenitrem E and penitrem F to penitrem A. This Penicillium ochrochloron protein is Cytochrome P450 monooxygenase ptmG.